Consider the following 54-residue polypeptide: Large ribosomal subunit protein bL33A (54 aa).

It belongs to the bacterial ribosomal protein bL33 family.

This is Large ribosomal subunit protein bL33A from Streptomyces avermitilis (strain ATCC 31267 / DSM 46492 / JCM 5070 / NBRC 14893 / NCIMB 12804 / NRRL 8165 / MA-4680).